The primary structure comprises 266 residues: UPF0328 protein ECU03_0130 (266 aa).

It belongs to the UPF0328 family.

The protein is UPF0328 protein ECU03_0130 of Encephalitozoon cuniculi (strain GB-M1) (Microsporidian parasite).